Consider the following 323-residue polypeptide: Beta-ketoacyl-[acyl-carrier-protein] synthase III (323 aa).

Active-site residues include Cys113 and His250. Residues 251-255 form an ACP-binding region; it reads QANKR. Asn280 is a catalytic residue.

It belongs to the thiolase-like superfamily. FabH family. Homodimer.

The protein localises to the cytoplasm. The enzyme catalyses malonyl-[ACP] + acetyl-CoA + H(+) = 3-oxobutanoyl-[ACP] + CO2 + CoA. It functions in the pathway lipid metabolism; fatty acid biosynthesis. Catalyzes the condensation reaction of fatty acid synthesis by the addition to an acyl acceptor of two carbons from malonyl-ACP. Catalyzes the first condensation reaction which initiates fatty acid synthesis and may therefore play a role in governing the total rate of fatty acid production. Possesses both acetoacetyl-ACP synthase and acetyl transacylase activities. Its substrate specificity determines the biosynthesis of branched-chain and/or straight-chain of fatty acids. This Agrobacterium fabrum (strain C58 / ATCC 33970) (Agrobacterium tumefaciens (strain C58)) protein is Beta-ketoacyl-[acyl-carrier-protein] synthase III.